The following is a 287-amino-acid chain: Bifunctional protein FolD (287 aa).

NADP(+) contacts are provided by residues 165–167, Thr190, and Ile231; that span reads GRG.

Belongs to the tetrahydrofolate dehydrogenase/cyclohydrolase family. Homodimer.

It carries out the reaction (6R)-5,10-methylene-5,6,7,8-tetrahydrofolate + NADP(+) = (6R)-5,10-methenyltetrahydrofolate + NADPH. It catalyses the reaction (6R)-5,10-methenyltetrahydrofolate + H2O = (6R)-10-formyltetrahydrofolate + H(+). The protein operates within one-carbon metabolism; tetrahydrofolate interconversion. Catalyzes the oxidation of 5,10-methylenetetrahydrofolate to 5,10-methenyltetrahydrofolate and then the hydrolysis of 5,10-methenyltetrahydrofolate to 10-formyltetrahydrofolate. This is Bifunctional protein FolD from Heliobacterium modesticaldum (strain ATCC 51547 / Ice1).